The primary structure comprises 273 residues: Rhamnulose-1-phosphate aldolase (273 aa).

The active site involves Glu-117. His-140, His-142, and His-211 together coordinate Zn(2+).

It belongs to the aldolase class II family. RhaD subfamily. Zn(2+) serves as cofactor.

It localises to the cytoplasm. It carries out the reaction L-rhamnulose 1-phosphate = (S)-lactaldehyde + dihydroxyacetone phosphate. Its pathway is carbohydrate degradation; L-rhamnose degradation; glycerone phosphate from L-rhamnose: step 3/3. Catalyzes the reversible cleavage of L-rhamnulose-1-phosphate to dihydroxyacetone phosphate (DHAP) and L-lactaldehyde. The chain is Rhamnulose-1-phosphate aldolase from Listeria innocua serovar 6a (strain ATCC BAA-680 / CLIP 11262).